A 340-amino-acid polypeptide reads, in one-letter code: Protein RecA (340 aa).

Residue 65–72 (GPESGGKT) participates in ATP binding.

This sequence belongs to the RecA family.

The protein localises to the cytoplasm. Functionally, can catalyze the hydrolysis of ATP in the presence of single-stranded DNA, the ATP-dependent uptake of single-stranded DNA by duplex DNA, and the ATP-dependent hybridization of homologous single-stranded DNAs. It interacts with LexA causing its activation and leading to its autocatalytic cleavage. The sequence is that of Protein RecA from Thermus thermophilus.